A 334-amino-acid polypeptide reads, in one-letter code: Guanine nucleotide-binding protein subunit beta-like protein (334 aa).

WD repeat units lie at residues 14 to 55 (GHKD…DSEF), 65 to 104 (GHSKRINGLDVSKDGNMMVTVGSDGIGRIWDTESKKSILL), 106 to 145 (GHGRDVLCVSINSNDTKIVTGSVDRTMNLYNTKGDLVLKM), 152 to 192 (MHRG…HLQT), 215 to 256 (DESK…QSFD), and 257 to 294 (AIVPVRSIAVGETEPVIALGTDESVIIWETISSRVIAS).

This sequence belongs to the WD repeat G protein beta family.

The polypeptide is Guanine nucleotide-binding protein subunit beta-like protein (Encephalitozoon cuniculi (strain GB-M1) (Microsporidian parasite)).